The sequence spans 212 residues: Ion-translocating oxidoreductase complex subunit G (212 aa).

Residues 9-29 (GLLLALFALLCTGLVAVVNQQ) traverse the membrane as a helical segment. Residue Thr-176 is modified to FMN phosphoryl threonine.

It belongs to the RnfG family. The complex is composed of six subunits: RnfA, RnfB, RnfC, RnfD, RnfE and RnfG. Requires FMN as cofactor.

The protein localises to the cell inner membrane. Functionally, part of a membrane-bound complex that couples electron transfer with translocation of ions across the membrane. The sequence is that of Ion-translocating oxidoreductase complex subunit G from Shewanella oneidensis (strain ATCC 700550 / JCM 31522 / CIP 106686 / LMG 19005 / NCIMB 14063 / MR-1).